A 338-amino-acid polypeptide reads, in one-letter code: MHLAALHTPSQIQLNQQGNLKHFLTIEGLSKETLTKILDTAQSFINDQNQLITTPLLEGRTVMNLFFENSTRTRTTFEAAAKRLSANVLNIDIARSSTSKGETLRDTLWNLEAMAADIFVVRHSSSGAAHFIAKDVCPHVAIINAGDGRHAHPTQAMLDMLTIRRETKKPFEELSVAIIGDIKHSRVARSNIAALQTLGCNDIRVIAPNTLLPVGFKEYGDHVRLFNKMDDGVKDCDVIIALRIQNERIDSPALSSQAEFYRMYGLNQERLALAKPDCIVMHPGPMNRGVEIDSSIADGPQSVILHQVTNGIAVRMAVLALSMQGQLQEQGLIEAIAV.

Positions 72 and 73 each coordinate carbamoyl phosphate. Lys100 contacts L-aspartate. Carbamoyl phosphate contacts are provided by Arg122, His152, and Gln155. Residues Arg186 and Arg243 each contribute to the L-aspartate site. Carbamoyl phosphate contacts are provided by Gly284 and Pro285.

This sequence belongs to the aspartate/ornithine carbamoyltransferase superfamily. ATCase family. As to quaternary structure, heterododecamer (2C3:3R2) of six catalytic PyrB chains organized as two trimers (C3), and six regulatory PyrI chains organized as three dimers (R2).

It catalyses the reaction carbamoyl phosphate + L-aspartate = N-carbamoyl-L-aspartate + phosphate + H(+). Its pathway is pyrimidine metabolism; UMP biosynthesis via de novo pathway; (S)-dihydroorotate from bicarbonate: step 2/3. In terms of biological role, catalyzes the condensation of carbamoyl phosphate and aspartate to form carbamoyl aspartate and inorganic phosphate, the committed step in the de novo pyrimidine nucleotide biosynthesis pathway. This chain is Aspartate carbamoyltransferase catalytic subunit, found in Acinetobacter baylyi (strain ATCC 33305 / BD413 / ADP1).